We begin with the raw amino-acid sequence, 627 residues long: Transducer protein MpcT (627 aa).

Helical transmembrane passes span 28-48 and 55-75; these read MLTA…LTVF and LIGV…TYLI. HAMP domains follow at residues 78–132 and 192–247; these read ADFV…VASR and EQLR…DTIS. The Methyl-accepting transducer domain maps to 266 to 502; it reads RVDAVADRSA…DVVGMVEEVA (237 aa). Residues Glu-310, Glu-416, and Glu-507 each carry the glutamate methyl ester (Glu) modification. Disordered regions lie at residues 505–527 and 557–627; these read SEET…DATD and GTAD…ADSQ. Positions 580–590 are enriched in low complexity; it reads AAAVVDQPQPA.

The protein belongs to the methyl-accepting chemotaxis (MCP) protein family. As to quaternary structure, interacts with CheA, CheY and CheW1. Methylated by CheR.

The protein resides in the cell membrane. Mediates bacteriorhodopsin- and halorhodopsin-dependent photoresponses by detecting membrane potential changes. Probably transduces the signal to the histidine kinase CheA. In Halobacterium salinarum (strain ATCC 29341 / DSM 671 / R1), this protein is Transducer protein MpcT (mpcT).